A 90-amino-acid chain; its full sequence is Probable oxaloacetate decarboxylase gamma chain 2 (90 aa).

The helical transmembrane segment at 10 to 32 threads the bilayer; it reads GINLLTLGMGFVFIFLIFLVYAT.

It belongs to the OadG family. As to quaternary structure, heterotrimer of an alpha, a beta and a gamma subunit. Na(+) is required as a cofactor.

The protein localises to the cell membrane. It catalyses the reaction oxaloacetate + 2 Na(+)(in) + H(+) = pyruvate + 2 Na(+)(out) + CO2. Catalyzes the decarboxylation of oxaloacetate coupled to Na(+) translocation. The sequence is that of Probable oxaloacetate decarboxylase gamma chain 2 (oadG2) from Vibrio cholerae serotype O1 (strain ATCC 39315 / El Tor Inaba N16961).